The chain runs to 648 residues: Transcription termination factor FttA (648 aa).

The not required for dimerization, required for cleavage at some sites stretch occupies residues 1-179 (MIKRETQVDQ…QVGRNIYRKP (179 aa)). A KHa region spans residues 9–76 (DQILKDIRGI…ISIRPDPDVL (68 aa)). The segment at 77 to 144 (LPPEEAEKLI…WAPKVVRTPP (68 aa)) is KHb. A metallo-beta-lactamase N-terminus region spans residues 185 to 395 (WIRITGLGGF…LVMESTYGGA (211 aa)). Zn(2+) contacts are provided by H253, H255, D257, H258, H341, and D364. A beta-Casp region spans residues 396–589 (NDIQMPREEA…MEVHTIDGFS (194 aa)). The segment at 590 to 648 (GHADRRELMNYVAKVRPRPERVITVHGEPQKCLDLATSIHRKFGLSTRAPNNLDTIRLR) is metallo-beta-lactamase C-terminus. H615 serves as a coordination point for Zn(2+).

Belongs to the metallo-beta-lactamase superfamily. RNA-metabolizing metallo-beta-lactamase-like family. FttA subfamily. Homodimer. Interacts with RNA polymerase (RNAP), interacts with the Spt4-Spt5 complex. Zn(2+) serves as cofactor.

Its activity is regulated as follows. EndoRNase activity is inhibited by 1,10-phenanthroline. Its function is as follows. Terminates transcription on the whole genome. Termination is linked to FttA-mediated RNA cleavage and does not require NTP hydrolysis. Cleaves endonucleolytically at the RNA exit channel of RNA polymerase (RNAP); the 5'-3' exonuclease activity of this protein degrades the nascent RNA released from RNAP. Functionally, a single-stranded endoribonuclease (endoRNase) with a preference for cleavage at CA dinucleotides. Has 5'-3' exoribonuclease (exoRNase) activity on 5'-monophosphorylated RNA; this activity does not occur on 5'-tri-phosphorylated or 5'-OH substrates. Also has weak activity 5'-3' exodeoxyribonuclease activity on ssDNA. This chain is Transcription termination factor FttA, found in Pyrococcus abyssi (strain GE5 / Orsay).